The sequence spans 375 residues: Arsenite methyltransferase (375 aa).

S335 carries the post-translational modification Phosphoserine.

The protein belongs to the methyltransferase superfamily. Arsenite methyltransferase family.

Its subcellular location is the cytoplasm. It is found in the cytosol. It carries out the reaction arsenic triglutathione + [thioredoxin]-dithiol + S-adenosyl-L-methionine + 2 H2O = methylarsonous acid + [thioredoxin]-disulfide + 3 glutathione + S-adenosyl-L-homocysteine + H(+). It catalyses the reaction arsenic triglutathione + 2 [thioredoxin]-dithiol + 2 S-adenosyl-L-methionine + H2O = dimethylarsinous acid + 2 [thioredoxin]-disulfide + 3 glutathione + 2 S-adenosyl-L-homocysteine + 2 H(+). The catalysed reaction is arsenic triglutathione + 3 [thioredoxin]-dithiol + 3 S-adenosyl-L-methionine = trimethylarsine + 3 [thioredoxin]-disulfide + 3 glutathione + 3 S-adenosyl-L-homocysteine + 3 H(+). In terms of biological role, catalyzes the transfer of a methyl group from AdoMet to trivalent arsenicals producing methylated and dimethylated arsenicals. It methylates arsenite to form methylarsonate, Me-AsO(3)H(2), which is reduced by methylarsonate reductase to methylarsonite, Me-As(OH)2. Methylarsonite is also a substrate and it is converted into the much less toxic compound dimethylarsinate (cacodylate), Me(2)As(O)-OH. In Homo sapiens (Human), this protein is Arsenite methyltransferase (AS3MT).